A 275-amino-acid polypeptide reads, in one-letter code: Tropinone reductase-like 2 (275 aa).

17–41 (IITGGASGIGACTAELFHENGAKVV) serves as a coordination point for NAD(+). Ser-150 is a substrate binding site. The active-site Proton acceptor is Tyr-163.

The protein belongs to the short-chain dehydrogenases/reductases (SDR) family.

In terms of biological role, has no tropinone reductase activity. This Erythroxylum coca (Coca plant) protein is Tropinone reductase-like 2.